We begin with the raw amino-acid sequence, 1708 residues long: Clathrin heavy chain 1 (1708 aa).

Residues 1–492 (MAAANAPIAM…VDNDLALKIY (492 aa)) are globular terminal domain. WD40-like repeat regions lie at residues 25 to 67 (FVTF…RPIT), 68 to 113 (ADSA…MPEQ), 114 to 155 (VVFW…ANLA), 156 to 205 (NNQI…QALE), 206 to 270 (AHAA…PDFQ), 271 to 314 (DDFP…ISPD), and 315 to 343 (PIFL…ATVN). Residues 462–478 (ENWLAEDKLECSEELGD) form a binding site for the uncoating ATPase, involved in lattice disassembly region. The tract at residues 493-536 (IKARATPKVVAAFAERREFDKILIYSKQVGYTPDYLFLLQTILR) is flexible linker. The distal segment stretch occupies residues 537-648 (TDPQGAVNFA…RALQHYTELP (112 aa)). Residues 537-1708 (TDPQGAVNFA…AYGMPPMGSY (1172 aa)) are heavy chain arm. CHCR repeat units follow at residues 551-697 (QMEG…QIVV), 700-842 (AKEY…PEDF), 847-986 (ILSV…QLID), 993-1138 (LPES…VSEA), 1142-1283 (FIRA…FRLA), 1288-1434 (LNII…DLIN), and 1437-1580 (LNVL…KECF). The interval 653–1708 (VMVNTHAIEP…AYGMPPMGSY (1056 aa)) is proximal segment. An involved in binding clathrin light chain region spans residues 1227–1536 (AAKIIYAFIS…YIYKKAGRWK (310 aa)). The interval 1564-1708 (SEDLLVYFIE…AYGMPPMGSY (145 aa)) is trimerization.

Belongs to the clathrin heavy chain family. As to quaternary structure, clathrin triskelions, composed of 3 heavy chains and 3 light chains, are the basic subunits of the clathrin coat.

It is found in the cytoplasmic vesicle membrane. The protein resides in the membrane. Its subcellular location is the coated pit. Functionally, clathrin is the major protein of the polyhedral coat of coated pits and vesicles. The polypeptide is Clathrin heavy chain 1 (Oryza sativa subsp. japonica (Rice)).